A 248-amino-acid polypeptide reads, in one-letter code: 2,3-dihydro-2,3-dihydroxybenzoate dehydrogenase (248 aa).

Residue 9-33 (WVTGAGKGIGYATALAFVEAGAKVT) coordinates NAD(+). Ser131 contributes to the substrate binding site. The active-site Proton acceptor is the Tyr144.

Belongs to the short-chain dehydrogenases/reductases (SDR) family. Homotetramer; dimer of dimers. EntA and EntE interact together.

The enzyme catalyses (2S,3S)-2,3-dihydroxy-2,3-dihydrobenzoate + NAD(+) = 2,3-dihydroxybenzoate + NADH + H(+). The protein operates within siderophore biosynthesis; enterobactin biosynthesis. Its activity is regulated as follows. Inhibited by cis-2-hydroxy-3-cyclohexen-1-carboxylate, cis-2-hydroxycyclohexane-1-carboxylate and trans-2-hydroxycyclohexane-1-carboxylate. Functionally, involved in the biosynthesis of the siderophore enterobactin (enterochelin), which is a macrocyclic trimeric lactone of N-(2,3-dihydroxybenzoyl)-serine. Catalyzes the reversible NAD-dependent oxidation of the C3-hydroxyl group of 2,3-dihydro-2,3-dihydroxybenzoate (2,3-diDHB), producing the transient intermediate 2-hydroxy-3-oxo-4,6-cyclohexadiene-1-carboxylate, which undergoes rapid aromatization to the final product, 2,3-dihydroxybenzoate (2,3-DHB). Only the compounds with a C3-hydroxyl group such as methyl 2,3-dihydro-2,3-dihydroxybenzoate, methyl-3-hydroxy-1,4-cyclohexadiene-1-carboxylate, trans-3-hydroxy-2-cyclohexene-1-carboxylate, cis-3-hydroxy-4-cyclohexene-1-carboxylate, cis-3-hydroxycyclohexane-1-carboxylic acid are oxidized to the corresponding ketone products. The stereospecificity of the C3 allylic alcohol group oxidation is 3R in a 1R,3R dihydro substrate. It can also increase the DHB-AMP ligase activity of EntE by interaction EntE. This Escherichia coli (strain K12) protein is 2,3-dihydro-2,3-dihydroxybenzoate dehydrogenase.